Here is a 237-residue protein sequence, read N- to C-terminus: MLQHTWLPKPPNLTLLSDEVHLWRIPLDQPESQLQDLAATLSSDELARANRFYFPEHRRRFTAGRGILRSILGGYLGVEPGQVKFDYESRGKPILGDRFAESGLLFNLSHSQNLALCAVNYTRQIGIDLEYLRPTSDLESLAKRFFLPREYELLRSLPDEQKQKIFFRYWTCKEAYLKATGDGIAKLEEIEIALTPTEPAKLQTAPAWSLLELVPDDNCVAAVAVAGFGWQPKFWHY.

D128, E130, and E174 together coordinate Mg(2+).

The protein belongs to the P-Pant transferase superfamily. Gsp/Sfp/HetI/AcpT family. Mg(2+) is required as a cofactor.

It carries out the reaction apo-[peptidyl-carrier protein] + CoA = holo-[peptidyl-carrier protein] + adenosine 3',5'-bisphosphate + H(+). Its function is as follows. Probably activates the acyl carrier protein (ACP) domain of HetM, by transferring the 4'-phosphopantetheinyl moiety of coenzyme A (CoA) to a serine residue. May be required for maintaining vegetative growth and probably acts via HetN to inhibit differentiation. The polypeptide is 4'-phosphopantetheinyl transferase HetI (hetI) (Nostoc sp. (strain PCC 7120 / SAG 25.82 / UTEX 2576)).